Here is a 214-residue protein sequence, read N- to C-terminus: MELAAGSFSEEQFWEACAELQQPALAGADWQLLVETSGISIYRLLDKKTGLYEYKVFGVLEDCSPTLLADIYMDSDYRKQWDQYVKELYEQECNGETVVYWEVKYPFPMSNRDYVYLRQRRDLDMEGRKIHVILARSTSMPQLGERSGVIRVKQYKQSLAIESDGKKGSKVFMYYFDNPGGQIPSWLINWAAKNGVPNFLKDMARACQNYLKKT.

Methionine 1 is modified (N-acetylmethionine). Residues 1–212 form the START domain; it reads MELAAGSFSE…MARACQNYLK (212 aa). 2 residues coordinate a 1,2-diacyl-sn-glycero-3-phosphocholine: tyrosine 72 and arginine 78. Residue serine 139 is modified to Phosphoserine. A 1,2-diacyl-sn-glycero-3-phosphocholine is bound at residue glutamine 157.

In terms of assembly, interacts with ACOT13/THEM2. Highest expression in liver, placenta, testis, kidney and heart. Low levels in brain and lung. No expression detected in thymus.

The protein resides in the cytoplasm. Its function is as follows. Catalyzes the transfer of phosphatidylcholine between membranes. Binds a single lipid molecule. The polypeptide is Phosphatidylcholine transfer protein (PCTP) (Homo sapiens (Human)).